Consider the following 355-residue polypeptide: Peptide chain release factor 1 (355 aa).

Position 233 is an N5-methylglutamine (Gln233).

The protein belongs to the prokaryotic/mitochondrial release factor family. Methylated by PrmC. Methylation increases the termination efficiency of RF1.

It is found in the cytoplasm. Peptide chain release factor 1 directs the termination of translation in response to the peptide chain termination codons UAG and UAA. This Clostridium tetani (strain Massachusetts / E88) protein is Peptide chain release factor 1.